A 145-amino-acid polypeptide reads, in one-letter code: D-aminoacyl-tRNA deacylase (145 aa).

Residues 137 to 138 (GP) carry the Gly-cisPro motif, important for rejection of L-amino acids motif.

The protein belongs to the DTD family. In terms of assembly, homodimer.

It is found in the cytoplasm. It catalyses the reaction glycyl-tRNA(Ala) + H2O = tRNA(Ala) + glycine + H(+). The enzyme catalyses a D-aminoacyl-tRNA + H2O = a tRNA + a D-alpha-amino acid + H(+). An aminoacyl-tRNA editing enzyme that deacylates mischarged D-aminoacyl-tRNAs. Also deacylates mischarged glycyl-tRNA(Ala), protecting cells against glycine mischarging by AlaRS. Acts via tRNA-based rather than protein-based catalysis; rejects L-amino acids rather than detecting D-amino acids in the active site. By recycling D-aminoacyl-tRNA to D-amino acids and free tRNA molecules, this enzyme counteracts the toxicity associated with the formation of D-aminoacyl-tRNA entities in vivo and helps enforce protein L-homochirality. This Shewanella frigidimarina (strain NCIMB 400) protein is D-aminoacyl-tRNA deacylase.